The chain runs to 272 residues: Phosphoglycolate phosphatase (272 aa).

The Nucleophile role is filled by D19. Residues D19, D21, and D182 each coordinate Mg(2+).

The protein belongs to the HAD-like hydrolase superfamily. CbbY/CbbZ/Gph/YieH family. The cofactor is Mg(2+).

The catalysed reaction is 2-phosphoglycolate + H2O = glycolate + phosphate. It functions in the pathway organic acid metabolism; glycolate biosynthesis; glycolate from 2-phosphoglycolate: step 1/1. Specifically catalyzes the dephosphorylation of 2-phosphoglycolate. Is involved in the dissimilation of the intracellular 2-phosphoglycolate formed during the DNA repair of 3'-phosphoglycolate ends, a major class of DNA lesions induced by oxidative stress. In Pseudomonas syringae pv. syringae (strain B728a), this protein is Phosphoglycolate phosphatase.